Reading from the N-terminus, the 331-residue chain is Phosphoribosylformylglycinamidine cyclo-ligase (331 aa).

It belongs to the AIR synthase family.

The protein localises to the cytoplasm. The catalysed reaction is 2-formamido-N(1)-(5-O-phospho-beta-D-ribosyl)acetamidine + ATP = 5-amino-1-(5-phospho-beta-D-ribosyl)imidazole + ADP + phosphate + H(+). It functions in the pathway purine metabolism; IMP biosynthesis via de novo pathway; 5-amino-1-(5-phospho-D-ribosyl)imidazole from N(2)-formyl-N(1)-(5-phospho-D-ribosyl)glycinamide: step 2/2. The chain is Phosphoribosylformylglycinamidine cyclo-ligase from Clostridium novyi (strain NT).